The primary structure comprises 201 residues: FMN-dependent NADH:quinone oxidoreductase (201 aa).

Residues Ser10, 16–18 (SQS), and 96–99 (MYNF) contribute to the FMN site.

This sequence belongs to the azoreductase type 1 family. In terms of assembly, homodimer. Requires FMN as cofactor.

The catalysed reaction is 2 a quinone + NADH + H(+) = 2 a 1,4-benzosemiquinone + NAD(+). It carries out the reaction N,N-dimethyl-1,4-phenylenediamine + anthranilate + 2 NAD(+) = 2-(4-dimethylaminophenyl)diazenylbenzoate + 2 NADH + 2 H(+). In terms of biological role, quinone reductase that provides resistance to thiol-specific stress caused by electrophilic quinones. Also exhibits azoreductase activity. Catalyzes the reductive cleavage of the azo bond in aromatic azo compounds to the corresponding amines. This Sodalis glossinidius (strain morsitans) protein is FMN-dependent NADH:quinone oxidoreductase.